A 188-amino-acid chain; its full sequence is Elongation factor P (188 aa).

This sequence belongs to the elongation factor P family.

The protein resides in the cytoplasm. It participates in protein biosynthesis; polypeptide chain elongation. Functionally, involved in peptide bond synthesis. Stimulates efficient translation and peptide-bond synthesis on native or reconstituted 70S ribosomes in vitro. Probably functions indirectly by altering the affinity of the ribosome for aminoacyl-tRNA, thus increasing their reactivity as acceptors for peptidyl transferase. The polypeptide is Elongation factor P (Bradyrhizobium diazoefficiens (strain JCM 10833 / BCRC 13528 / IAM 13628 / NBRC 14792 / USDA 110)).